A 260-amino-acid polypeptide reads, in one-letter code: 3'-5' ssDNA/RNA exonuclease TatD (260 aa).

The a divalent metal cation site is built by Glu92, His128, and His153.

Belongs to the metallo-dependent hydrolases superfamily. TatD-type hydrolase family. TatD subfamily. As to quaternary structure, monomer. Requires Mg(2+) as cofactor.

It localises to the cytoplasm. Its function is as follows. 3'-5' exonuclease that prefers single-stranded DNA and RNA. May play a role in the H(2)O(2)-induced DNA damage repair. This chain is 3'-5' ssDNA/RNA exonuclease TatD, found in Pectobacterium atrosepticum (strain SCRI 1043 / ATCC BAA-672) (Erwinia carotovora subsp. atroseptica).